Consider the following 832-residue polypeptide: Cytosolic carboxypeptidase-like protein 5 (832 aa).

Residues T27–P50 form a disordered region. Residues A38–P50 are compositionally biased toward low complexity. In terms of domain architecture, Peptidase M14 spans Y157 to A571. Residues H252 and E255 each contribute to the Zn(2+) site. Over residues N343–S354 the composition is skewed to low complexity. 2 disordered regions span residues N343–P362 and L376–P402. The segment covering G384–D401 has biased composition (basic and acidic residues). A Zn(2+)-binding site is contributed by H435. E517 serves as the catalytic Proton donor/acceptor. Residues S606–G752 form a disordered region. Residues P621–A636 show a composition bias toward polar residues. Residues S644 to S654 show a composition bias toward low complexity. Residues Q655 to S666 are compositionally biased toward polar residues. Low complexity predominate over residues Q708–G752.

Belongs to the peptidase M14 family. It depends on Zn(2+) as a cofactor.

Its subcellular location is the cytoplasm. It localises to the cytosol. The protein resides in the nucleus. The protein localises to the cytoskeleton. It is found in the spindle. Its subcellular location is the midbody. It carries out the reaction gamma-L-glutamyl-L-glutamyl-[protein] + H2O = L-glutamyl-[protein] + L-glutamate. The enzyme catalyses (L-glutamyl)(n+1)-gamma-L-glutamyl-L-glutamyl-[protein] + H2O = (L-glutamyl)(n)-gamma-L-glutamyl-L-glutamyl-[protein] + L-glutamate. It catalyses the reaction C-terminal L-alpha-aminoacyl-L-glutamyl-[tubulin] + H2O = C-terminal L-alpha-aminoacyl-[tubulin] + L-glutamate. The catalysed reaction is C-terminal L-alpha-aminoacyl-L-glutamyl-L-glutamyl-[tubulin] + H2O = C-terminal L-alpha-aminoacyl-L-glutamyl-[tubulin] + L-glutamate. Metallocarboxypeptidase that mediates deglutamylation of tubulin and non-tubulin target proteins. Catalyzes the removal of polyglutamate side chains present on the gamma-carboxyl group of glutamate residues within the C-terminal tail of alpha- and beta-tubulin. Cleaves alpha- and gamma-linked polyglutamate tubulin side-chain, as well as the branching point glutamate. Also catalyzes the removal of alpha-linked glutamate residues from the carboxy-terminus of alpha-tubulin. Mediates deglutamylation of nucleotidyltransferase CGAS, leading to CGAS antiviral defense response activation. The polypeptide is Cytosolic carboxypeptidase-like protein 5 (Agbl5) (Rattus norvegicus (Rat)).